A 305-amino-acid polypeptide reads, in one-letter code: Heme A synthase (305 aa).

At 1–6 the chain is on the cytoplasmic side; the sequence is MKKFLK. The chain crosses the membrane as a helical span at residues 7 to 27; that stretch reads VWSVLTIICMTVVVFGGALVT. Residues 28 to 63 are Extracellular-facing; the sequence is KTGSADGCGNSWPLCNGQLVRLTDVTPEKLIEFMHR. An intrachain disulfide couples Cys-35 to Cys-42. Glu-59 is an active-site residue. Residue His-62 coordinates heme o. The helical transmembrane segment at 64 to 84 threads the bilayer; it reads MTTGISSIFVIVLAICAWIYM. Over 85-92 the chain is Cytoplasmic; it reads KNRRETKP. Residues 93–113 form a helical membrane-spanning segment; sequence LAIIAVLFLIIQALMGMAAVV. At 114-122 the chain is on the extracellular side; the sequence is WGQNPYIMA. A helical membrane pass occupies residues 123 to 143; sequence LHFGISIICYASIVLLALMIF. His-124 is a binding site for heme o. The Cytoplasmic segment spans residues 144-160; it reads EVDRKFDARNLVMGTKL. The chain crosses the membrane as a helical span at residues 161–181; that stretch reads RINIYALTIYTYLAVYTGALV. The Extracellular segment spans residues 182–212; the sequence is RHEKASMAVPVWPFENGHFIMPTSVQDYVQY. The chain crosses the membrane as a helical span at residues 213–233; it reads FHRLAAFILIVWLLYVTWLVF. Position 214 (His-214) interacts with heme b. Residues 234 to 240 lie on the Cytoplasmic side of the membrane; the sequence is RDYRRYR. A helical membrane pass occupies residues 241–261; it reads VLTFSMVLSLVFIALQAVTGA. Over 262–271 the chain is Extracellular; that stretch reads LSVYTGVNLY. Residues 272–292 form a helical membrane-spanning segment; it reads IALAHSLIITMLFALLCYLCL. A heme b-binding site is contributed by His-276. Residues 293–305 are Cytoplasmic-facing; sequence LASRSKSNRLRIK.

Belongs to the COX15/CtaA family. Type 1 subfamily. In terms of assembly, interacts with CtaB. The cofactor is heme b.

It is found in the cell membrane. The catalysed reaction is Fe(II)-heme o + 2 A + H2O = Fe(II)-heme a + 2 AH2. It functions in the pathway porphyrin-containing compound metabolism; heme A biosynthesis; heme A from heme O: step 1/1. Its function is as follows. Catalyzes the conversion of heme O to heme A by two successive hydroxylations of the methyl group at C8. The first hydroxylation forms heme I, the second hydroxylation results in an unstable dihydroxymethyl group, which spontaneously dehydrates, resulting in the formyl group of heme A. This chain is Heme A synthase, found in Listeria monocytogenes serotype 4b (strain F2365).